The primary structure comprises 267 residues: Tryptophan synthase alpha chain (267 aa).

Active-site proton acceptor residues include glutamate 49 and aspartate 60.

This sequence belongs to the TrpA family. Tetramer of two alpha and two beta chains.

The catalysed reaction is (1S,2R)-1-C-(indol-3-yl)glycerol 3-phosphate + L-serine = D-glyceraldehyde 3-phosphate + L-tryptophan + H2O. It participates in amino-acid biosynthesis; L-tryptophan biosynthesis; L-tryptophan from chorismate: step 5/5. Its function is as follows. The alpha subunit is responsible for the aldol cleavage of indoleglycerol phosphate to indole and glyceraldehyde 3-phosphate. This chain is Tryptophan synthase alpha chain, found in Salinispora tropica (strain ATCC BAA-916 / DSM 44818 / JCM 13857 / NBRC 105044 / CNB-440).